We begin with the raw amino-acid sequence, 196 residues long: Glycerol-3-phosphate acyltransferase (196 aa).

A run of 4 helical transmembrane segments spans residues 4-24 (IYIA…GLIL), 70-90 (VLIA…LGAF), 111-131 (IGVL…LWLA), and 152-172 (IFLW…LTLL).

The protein belongs to the PlsY family. As to quaternary structure, probably interacts with PlsX.

The protein resides in the cell inner membrane. The catalysed reaction is an acyl phosphate + sn-glycerol 3-phosphate = a 1-acyl-sn-glycero-3-phosphate + phosphate. It participates in lipid metabolism; phospholipid metabolism. Its function is as follows. Catalyzes the transfer of an acyl group from acyl-phosphate (acyl-PO(4)) to glycerol-3-phosphate (G3P) to form lysophosphatidic acid (LPA). This enzyme utilizes acyl-phosphate as fatty acyl donor, but not acyl-CoA or acyl-ACP. The protein is Glycerol-3-phosphate acyltransferase of Rhodopseudomonas palustris (strain BisB5).